A 934-amino-acid polypeptide reads, in one-letter code: Protein unc-45 homolog B (934 aa).

TPR repeat units follow at residues 9 to 42 (SVQLKEEGNKHFQAGEIDQAIDCYTKAIKTCKKE), 48 to 81 (AVIYRNRSACFLKKENYSNAASDATKAIDVDAAD), and 83 to 115 (KALYRRCQAFEKLGKLDMAFKDVQRCATIEPKN). 3 ARM repeats span residues 174 to 213 (DAGAERIFQNNGVPLLMQLIDTGKPEMILAAIRTLSGMCT), 216 to 255 (RARATAIIHSVGISKLCSIMAVDNEEIALATANLFQCVND), and 753 to 792 (DKLRVKILKEKALPEIENYMFEDHEQIRQAATECMCNLVC).

Interacts with apobec2a, apobec2b, hsp90a.1, hsp90a.2, hsp90ab1 and myosin. Expressed in striated muscle tissue including somites, heart and craniofacial muscle. Detected in mesoderm adjacent to the dorsal midline during the late gastrula stages and in somitic mesoderm during development of trunk skeletal muscle. Also expressed in cranial skeletal muscle and in cardiac and smooth muscle. Detected in somitic muscle and heart primordium of 24 hour embryos. At later stages, expressed in muscles of pectoral fins, jaw, branchial arches and eye.

Its subcellular location is the cytoplasm. It localises to the myofibril. The protein resides in the sarcomere. It is found in the z line. The protein localises to the a band. Its subcellular location is the perinuclear region. Acts as a co-chaperone for HSP90 and is required for proper folding of the myosin motor domain. Plays a role in sarcomere formation during muscle cell development. Required for myoseptal integrity, myofiber attachment, motility and craniofacial development. Is necessary for normal early lens development. The polypeptide is Protein unc-45 homolog B (Danio rerio (Zebrafish)).